The following is a 1331-amino-acid chain: Sodium-dependent transporter bedraggled (1331 aa).

Residues 1–62 are disordered; that stretch reads MSSKEQQAAG…QLEHEQFGLS (62 aa). Polar residues predominate over residues 16–25; that stretch reads NSNAYSSLPP. Over residues 28–43 the composition is skewed to gly residues; that stretch reads TGAGCSGAALGSGTGT. A glycan (N-linked (GlcNAc...) asparagine) is linked at N168. Disordered regions lie at residues 221–284 and 363–473; these read EPRT…TEPV and QTNA…SASS. The span at 258-282 shows a compositional bias: polar residues; that stretch reads KTFSCSLRPTSQIASSSGSLETSTE. The span at 369–383 shows a compositional bias: basic and acidic residues; that stretch reads SSEEPRPRQYGRRLE. Over residues 413–436 the composition is skewed to polar residues; that stretch reads LQDTPTHPIMSTCSELSSARSSRM. Positions 437–453 are enriched in low complexity; it reads PSPVSLPSDSSSSGSSS. Over residues 463-473 the composition is skewed to polar residues; sequence VQTTTMCSASS. 3 consecutive transmembrane segments (helical) span residues 505–525, 531–551, and 567–587; these read LALI…VLTI, FLLQ…WLQM, and ISPI…FLAL. N-linked (GlcNAc...) asparagine glycosylation is found at N627 and N631. 4 helical membrane-spanning segments follow: residues 667–687, 696–716, 741–761, and 778–798; these read QLAF…CKGL, IIYT…VYVV, TAAT…VIAI, and AILL…LALC. The N-linked (GlcNAc...) asparagine glycan is linked to N857. The chain crosses the membrane as a helical span at residues 890-910; it reads WVWAAVAFATFAGFGLAQLCV. N921 carries an N-linked (GlcNAc...) asparagine glycan. 4 helical membrane-spanning segments follow: residues 926–946, 956–976, 998–1018, and 1044–1064; these read VLLS…EMGI, LGGS…VFLI, AFLA…LSVV, and MGSL…IIQI. 3 disordered regions span residues 1086 to 1136, 1169 to 1238, and 1256 to 1275; these read PEEG…SYTT, SLDA…ASTL, and VRHR…TLPR. Polar residues-rich tracts occupy residues 1097-1115 and 1186-1196; these read ARQT…TTEG and ILTNPAGSSFN. Residues 1197-1209 show a composition bias toward low complexity; the sequence is ADPSPASSSSPES.

Belongs to the sodium:neurotransmitter symporter (SNF) (TC 2.A.22) family.

Its subcellular location is the membrane. In terms of biological role, putative sodium-dependent transporter which is required for viability, early imaginal disk development and adult motor coordination. Also has a role in the fate commitment of the R3/R4 photoreceptor cells. May function in ommatidial polarity by regulating the activity of the core polarity genes, acting upstream of (or in parallel to) Vang, dsh, pk, stan, and dgo, but downstream or independently of fz. The chain is Sodium-dependent transporter bedraggled from Drosophila melanogaster (Fruit fly).